The sequence spans 703 residues: Harmonin-binding protein USHBP1 (703 aa).

Residues 1 to 15 (MSARATRPRSRRGRH) show a composition bias toward basic residues. Disordered stretches follow at residues 1 to 113 (MSAR…PPGN) and 138 to 172 (HQPP…CQRE). Residues 189 to 227 (SREDELVRTQASLEAIRAEKETLQKEVQELQDSLLRLEP) adopt a coiled-coil conformation. Residues 228–256 (CPHLSHNQAGGSGSGSSSSEADREPWETQ) are disordered. A coiled-coil region spans residues 289-309 (EMHIMEAQMEQLRGSIEKLKC). A disordered region spans residues 396-416 (MDAGAQQNPQPSPEGSSVDKP). The segment covering 400 to 410 (AQQNPQPSPEG) has biased composition (polar residues). Residues 476–513 (RLEKTQIQQDLVAAREALADLMLRLQLVRREKRGLELR) are a coiled coil. Residues 540 to 583 (AGGANSSGGHSSGGGSSGDEEEWYQGLPAVPGGTSGIDGGQVGR) form a disordered region. Residues 572-581 (GTSGIDGGQV) are compositionally biased toward gly residues. Residues 596–681 (ASLTRTLDLQ…QAEEVAVLEA (86 aa)) adopt a coiled-coil conformation.

This sequence belongs to the MCC family. Interacts via its C-terminus with the first PDZ domain of USH1C. In terms of tissue distribution, highest level of expression in heart, and moderate to low expression in skeletal muscle, kidney, liver, small intestine, placenta and lung.

This is Harmonin-binding protein USHBP1 from Homo sapiens (Human).